Reading from the N-terminus, the 232-residue chain is Putative uridine kinase DAS2 (232 aa).

17 to 24 (GGHATGVG) lines the ATP pocket.

The protein belongs to the uridine kinase family.

It localises to the cytoplasm. It is found in the nucleus. It carries out the reaction uridine + ATP = UMP + ADP + H(+). The catalysed reaction is cytidine + ATP = CMP + ADP + H(+). It participates in pyrimidine metabolism; CTP biosynthesis via salvage pathway; CTP from cytidine: step 1/3. The protein operates within pyrimidine metabolism; UMP biosynthesis via salvage pathway; UMP from uridine: step 1/1. Functionally, putative uridine kinase identified in a screen for mutants with increased levels of rDNA transcription. This is Putative uridine kinase DAS2 (DAS2) from Saccharomyces cerevisiae (strain ATCC 204508 / S288c) (Baker's yeast).